The primary structure comprises 110 residues: Integration host factor subunit beta (110 aa).

Belongs to the bacterial histone-like protein family. In terms of assembly, heterodimer of an alpha and a beta chain.

This protein is one of the two subunits of integration host factor, a specific DNA-binding protein that functions in genetic recombination as well as in transcriptional and translational control. In Parvibaculum lavamentivorans (strain DS-1 / DSM 13023 / NCIMB 13966), this protein is Integration host factor subunit beta.